Here is a 295-residue protein sequence, read N- to C-terminus: Perivine-Nbeta-methyltransferase (295 aa).

An SAM motif I region spans residues 76–85 (ILDVGCGKGG). The Vacuolar targeting signal signature appears at 138–144 (DGSFELI). Positions 139–147 (GSFELIFVI) are SAM motif II. Residues 166–175 (VAAPGAQIVI) form an SAM motif III region.

Belongs to the class I-like SAM-binding methyltransferase superfamily. gTMT family. Homodimer. Mainly expressed in young leaves, and, to a lower extent, in mature leaves, flowers, stems and roots (at protein level). Transcripts levels are highest in flowers, moderate in leaves and low in roots and stems.

It is found in the vacuole membrane. The catalysed reaction is perivine + S-adenosyl-L-methionine = vobasine + S-adenosyl-L-homocysteine + 2 H(+). It participates in alkaloid biosynthesis; vindoline biosynthesis. Functionally, S-adenosyl-L-methionine-dependent N-methyltransferase involved in the biosynthesis of biologically active monoterpenoid indole alkaloids (MIAs) natural products including vindoline. Catalyzes the conversion of perivine to Nbeta-methylperivine (vobasine) by methylating its N4 nitrogen. Inactive with picrinine as substrate. This Catharanthus roseus (Madagascar periwinkle) protein is Perivine-Nbeta-methyltransferase.